The sequence spans 147 residues: Large ribosomal subunit protein uL15 (147 aa).

The disordered stretch occupies residues 1 to 46; sequence MSIRLENLSYTPGARKEKHRKGRGHAAGKGKQAGRGQSGQKKRSTV. A compositionally biased stretch (basic residues) spans 16 to 28; it reads KEKHRKGRGHAAG.

This sequence belongs to the universal ribosomal protein uL15 family. Part of the 50S ribosomal subunit.

Binds to the 23S rRNA. The sequence is that of Large ribosomal subunit protein uL15 from Mesomycoplasma hyopneumoniae (strain 232) (Mycoplasma hyopneumoniae).